Here is a 307-residue protein sequence, read N- to C-terminus: Mitochondrial 2-oxodicarboxylate carrier 2 (307 aa).

The next 6 helical transmembrane spans lie at Leu-10–Met-30, Ser-76–Thr-95, Ile-122–Ile-142, Gly-171–Phe-191, Leu-215–Val-235, and Cys-280–Phe-300. Solcar repeat units follow at residues Leu-10 to Ile-106, Thr-116 to Ser-200, and Gln-209 to Phe-299.

This sequence belongs to the mitochondrial carrier (TC 2.A.29) family.

The protein resides in the mitochondrion inner membrane. In terms of biological role, transports C5-C7 oxodicarboxylates across the inner membranes of mitochondria. Can transport 2-oxoadipate, 2-oxoglutarate, adipate, glutarate, 2-oxopimelate, oxaloacetate, citrate and malate. The main physiological role is probably to supply 2-oxoadipate and 2-oxoglutarate from the mitochondrial matrix to the cytosol where they are used in the biosynthesis of lysine and glutamate, respectively, and in lysine catabolism. The polypeptide is Mitochondrial 2-oxodicarboxylate carrier 2 (ODC2) (Saccharomyces cerevisiae (strain ATCC 204508 / S288c) (Baker's yeast)).